Reading from the N-terminus, the 132-residue chain is Gonadotropin subunit beta-1 (132 aa).

Residues 1 to 17 (MMRGVTMVLLLPMLVWA) form the signal peptide. Cystine bridges form between cysteine 25-cysteine 73, cysteine 39-cysteine 88, cysteine 50-cysteine 104, cysteine 54-cysteine 106, and cysteine 109-cysteine 116. 2 N-linked (GlcNAc...) asparagine glycosylation sites follow: asparagine 29 and asparagine 46.

Belongs to the glycoprotein hormones subunit beta family. In terms of assembly, heterodimer of an alpha and a beta chain.

It localises to the secreted. In terms of biological role, involved in gametogenesis and steroidogenesis. This is Gonadotropin subunit beta-1 (cgba) from Ictalurus punctatus (Channel catfish).